The following is a 1327-amino-acid chain: Polarized growth protein L1 (1327 aa).

Residues 1–30 (MRESFASLLATGAGKLALSLLFAATPFTSA) form the signal peptide. Residues 31-1169 (YTFNQVPSPN…FSQQNGKHLA (1139 aa)) are Extracellular-facing. N-linked (GlcNAc...) asparagine glycosylation is found at Asn-74, Asn-90, Asn-105, Asn-115, Asn-132, Asn-170, Asn-217, Asn-224, Asn-235, Asn-318, Asn-342, Asn-452, Asn-475, Asn-601, Asn-639, Asn-648, and Asn-691. A Kelch 1 repeat occupies 595–641 (NLYVAGNFSNNDGRNNIFSFKQGASDPTALPNRGLNRQVMTLYQNDS). The stretch at 699 to 754 (QVLAVSGFFDSVNEFNGNPSTNVQDFAVWVPSRSNWLHNLDFFTLAMSGRLMTFAD) is one Kelch 2 repeat. Asn-835, Asn-852, Asn-877, and Asn-931 each carry an N-linked (GlcNAc...) asparagine glycan. Kelch repeat units lie at residues 945–993 (DVFV…ISDT) and 994–1040 (QMYI…TIAN). Residues Asn-1000, Asn-1006, and Asn-1126 are each glycosylated (N-linked (GlcNAc...) asparagine). The helical transmembrane segment at 1170–1190 (LWAIVLIGLAIALVLTFLLVV) threads the bilayer. Residues 1191–1327 (AGILLEWYRN…VFDTILACSS (137 aa)) lie on the Cytoplasmic side of the membrane.

Belongs to the RAX2 family.

The protein localises to the cell membrane. Has been identified within the cluster that mediates the biosynthesis of squalestatin, but as its expression does not follow that of the other cluster members and it is not conserved in close related clusters, L1 seems not to be involved in the biosynthesis of squalestatin. Probably plays a role as a cell polarity regulator. The chain is Polarized growth protein L1 from Phoma sp. (strain ATCC 20986 / MF5453).